We begin with the raw amino-acid sequence, 1450 residues long: DNA-directed RNA polymerase III subunit rpc1 (1450 aa).

Zn(2+) is bound by residues C67, C70, C77, H80, C107, C110, and C154. Residues D491, D493, and D495 each contribute to the Mg(2+) site. The segment at 832–844 is bridging helix; the sequence is PTEFFFHTMGGRE.

The protein belongs to the RNA polymerase beta' chain family. As to quaternary structure, component of the RNA polymerase III (Pol III) complex consisting of 17 subunits.

The protein localises to the nucleus. The catalysed reaction is RNA(n) + a ribonucleoside 5'-triphosphate = RNA(n+1) + diphosphate. DNA-dependent RNA polymerase catalyzes the transcription of DNA into RNA using the four ribonucleoside triphosphates as substrates. Largest and catalytic core component of RNA polymerase III which synthesizes small RNAs, such as 5S rRNA and tRNAs. Forms the polymerase active center together with the second largest subunit. A single-stranded DNA template strand of the promoter is positioned within the central active site cleft of Pol III. A bridging helix emanates from RPC1 and crosses the cleft near the catalytic site and is thought to promote translocation of Pol III by acting as a ratchet that moves the RNA-DNA hybrid through the active site by switching from straight to bent conformations at each step of nucleotide addition. The chain is DNA-directed RNA polymerase III subunit rpc1 (polr3a) from Dictyostelium discoideum (Social amoeba).